A 211-amino-acid chain; its full sequence is Probable chemoreceptor glutamine deamidase CheD (211 aa).

Belongs to the CheD family.

The catalysed reaction is L-glutaminyl-[protein] + H2O = L-glutamyl-[protein] + NH4(+). Probably deamidates glutamine residues to glutamate on methyl-accepting chemotaxis receptors (MCPs), playing an important role in chemotaxis. In Hahella chejuensis (strain KCTC 2396), this protein is Probable chemoreceptor glutamine deamidase CheD.